The sequence spans 144 residues: Deoxyuridine 5'-triphosphate nucleotidohydrolase (144 aa).

Substrate contacts are provided by residues 63 to 65 (RSG), Asn76, 80 to 82 (TID), and Lys90.

The protein belongs to the dUTPase family. Mg(2+) serves as cofactor.

The catalysed reaction is dUTP + H2O = dUMP + diphosphate + H(+). It functions in the pathway pyrimidine metabolism; dUMP biosynthesis; dUMP from dCTP (dUTP route): step 2/2. Functionally, this enzyme is involved in nucleotide metabolism: it produces dUMP, the immediate precursor of thymidine nucleotides and it decreases the intracellular concentration of dUTP so that uracil cannot be incorporated into DNA. The sequence is that of Deoxyuridine 5'-triphosphate nucleotidohydrolase from Hydrogenobaculum sp. (strain Y04AAS1).